We begin with the raw amino-acid sequence, 423 residues long: MKTITTARLPWAAQSFALGICLIALLGCNHAANKSSASRADVKPVTVKLVDSQATMETRSLFAFMQEQRRHSIMFGHQHETTQGLTITRTDGTQSDTFNAVGDFAAVYGWDTLSIVAPKAEGDIVAQVKKAYARGGIITVSSHFDNPKTDTQKGVWPVGTSWDQTPAVVDSLPGGAYNPVLNGYLDQVAEWANNLKDEQGRLIPVIFRLYHENTGSWFWWGDKQSTPEQYKQLFRYSVEYLRDVKGVRNFLYAYSPNNFWDVTEANYLERYPGDEWVDVLGFDTYGPVADNADWFRNVVANAALVARMAEARGKIPVISEIGIRAPDIEAGLYDNQWYRKLISGLKADPDAREIAFLLVWRNAPQGVPGPNGTQVPHYWVPANRPENINNGTLEDFQAFYADEFTAFNRDIEQVYQRPTLIVK.

Positions 1-27 (MKTITTARLPWAAQSFALGICLIALLG) are cleaved as a signal peptide. The 354-residue stretch at 56–409 (METRSLFAFM…YADEFTAFNR (354 aa)) folds into the GH26 domain. Substrate contacts are provided by Glu-121, His-143, and Trp-162. Residue Glu-212 is the Proton donor of the active site. Positions 217 and 285 each coordinate substrate. Residue Glu-320 is the Nucleophile of the active site. Residues 360–361 (WR) and His-377 contribute to the substrate site.

The protein belongs to the glycosyl hydrolase 26 family. In terms of assembly, homodimer.

The catalysed reaction is Random hydrolysis of (1-&gt;4)-beta-D-mannosidic linkages in mannans, galactomannans and glucomannans.. In terms of biological role, catalyzes the endo hydrolysis of beta-1,4-linked mannan and galactomannan, but displays little activity towards other polysaccharides located in the plant cell wall. Preferentially hydrolyzes the larger oligosaccharides and has greater activity against non-substituted polysaccharides. It displays tight specificity for mannose at both the -2 and the -1 subsites. Appears to act in synergy with alpha-galactosidase (AgaA) to elicit hydrolysis of galactomannan. The protein is Mannan endo-1,4-beta-mannosidase of Cellvibrio japonicus (strain Ueda107) (Pseudomonas fluorescens subsp. cellulosa).